A 428-amino-acid polypeptide reads, in one-letter code: Enolase (428 aa).

A (2R)-2-phosphoglycerate-binding site is contributed by Gln163. Residue Glu205 is the Proton donor of the active site. Mg(2+) contacts are provided by Asp242, Glu286, and Asp313. Residues Lys338, Arg367, Ser368, and Lys389 each coordinate (2R)-2-phosphoglycerate. Residue Lys338 is the Proton acceptor of the active site.

This sequence belongs to the enolase family. The cofactor is Mg(2+).

It is found in the cytoplasm. The protein localises to the secreted. The protein resides in the cell surface. The enzyme catalyses (2R)-2-phosphoglycerate = phosphoenolpyruvate + H2O. It participates in carbohydrate degradation; glycolysis; pyruvate from D-glyceraldehyde 3-phosphate: step 4/5. Functionally, catalyzes the reversible conversion of 2-phosphoglycerate (2-PG) into phosphoenolpyruvate (PEP). It is essential for the degradation of carbohydrates via glycolysis. In Geobacter sulfurreducens (strain ATCC 51573 / DSM 12127 / PCA), this protein is Enolase.